The following is a 273-amino-acid chain: uncharacterized protein (273 aa).

Residues 1 to 21 (MKILRWLFALVMLIATTEAMA) form the signal peptide.

To S.typhimurium YadU.

In terms of biological role, part of the yfcOPQRSUV fimbrial operon. Could contribute to adhesion to various surfaces in specific environmental niches. Increases adhesion to eukaryotic T24 bladder epithelial cells in the absence of fim genes. This is an uncharacterized protein from Escherichia coli (strain K12).